Reading from the N-terminus, the 100-residue chain is Urease subunit gamma (100 aa).

The protein belongs to the urease gamma subunit family. As to quaternary structure, heterotrimer of UreA (gamma), UreB (beta) and UreC (alpha) subunits. Three heterotrimers associate to form the active enzyme.

It localises to the cytoplasm. It carries out the reaction urea + 2 H2O + H(+) = hydrogencarbonate + 2 NH4(+). It participates in nitrogen metabolism; urea degradation; CO(2) and NH(3) from urea (urease route): step 1/1. This is Urease subunit gamma from Synechococcus sp. (strain CC9605).